Consider the following 124-residue polypeptide: Fluoride-specific ion channel FluC (124 aa).

4 helical membrane passes run 1 to 21 (MLNT…RYGV), 36 to 56 (TMII…WFVV), 70 to 90 (TGIL…FLLI), and 100 to 120 (LYVI…FAII). Residues G74 and T77 each coordinate Na(+).

This sequence belongs to the fluoride channel Fluc/FEX (TC 1.A.43) family.

Its subcellular location is the cell inner membrane. The catalysed reaction is fluoride(in) = fluoride(out). Its activity is regulated as follows. Na(+) is not transported, but it plays an essential structural role and its presence is essential for fluoride channel function. Functionally, fluoride-specific ion channel. Important for reducing fluoride concentration in the cell, thus reducing its toxicity. The chain is Fluoride-specific ion channel FluC from Methylobacterium sp. (strain 4-46).